The following is an 86-amino-acid chain: Small ribosomal subunit protein bS20 (86 aa).

Belongs to the bacterial ribosomal protein bS20 family.

Binds directly to 16S ribosomal RNA. The sequence is that of Small ribosomal subunit protein bS20 from Mycolicibacterium gilvum (strain PYR-GCK) (Mycobacterium gilvum (strain PYR-GCK)).